A 110-amino-acid chain; its full sequence is UPF0060 membrane protein Pnap_4944 (110 aa).

Helical transmembrane passes span 8-28 (ILFA…WLVL), 33-53 (SLLL…LLTL), 65-85 (YGGM…GIAL), and 88-108 (WDLS…MQPS).

The protein belongs to the UPF0060 family.

It localises to the cell inner membrane. The sequence is that of UPF0060 membrane protein Pnap_4944 from Polaromonas naphthalenivorans (strain CJ2).